Here is a 108-residue protein sequence, read N- to C-terminus: Small ribosomal subunit protein uS17 (108 aa).

Belongs to the universal ribosomal protein uS17 family. As to quaternary structure, part of the 30S ribosomal subunit.

Functionally, one of the primary rRNA binding proteins, it binds specifically to the 5'-end of 16S ribosomal RNA. The sequence is that of Small ribosomal subunit protein uS17 from Methanocorpusculum labreanum (strain ATCC 43576 / DSM 4855 / Z).